A 479-amino-acid chain; its full sequence is ATP synthase subunit beta (479 aa).

168–175 (GGAGVGKT) contacts ATP.

This sequence belongs to the ATPase alpha/beta chains family. As to quaternary structure, F-type ATPases have 2 components, CF(1) - the catalytic core - and CF(0) - the membrane proton channel. CF(1) has five subunits: alpha(3), beta(3), gamma(1), delta(1), epsilon(1). CF(0) has three main subunits: a(1), b(2) and c(9-12). The alpha and beta chains form an alternating ring which encloses part of the gamma chain. CF(1) is attached to CF(0) by a central stalk formed by the gamma and epsilon chains, while a peripheral stalk is formed by the delta and b chains.

Its subcellular location is the cell membrane. The enzyme catalyses ATP + H2O + 4 H(+)(in) = ADP + phosphate + 5 H(+)(out). Functionally, produces ATP from ADP in the presence of a proton gradient across the membrane. The catalytic sites are hosted primarily by the beta subunits. This Frankia alni (strain DSM 45986 / CECT 9034 / ACN14a) protein is ATP synthase subunit beta.